Reading from the N-terminus, the 427-residue chain is Probable anaerobic glycerol-3-phosphate dehydrogenase subunit B (427 aa).

The protein belongs to the anaerobic G-3-P dehydrogenase subunit B family. Requires FMN as cofactor.

The catalysed reaction is a quinone + sn-glycerol 3-phosphate = dihydroxyacetone phosphate + a quinol. It functions in the pathway polyol metabolism; glycerol degradation via glycerol kinase pathway; glycerone phosphate from sn-glycerol 3-phosphate (anaerobic route): step 1/1. The sequence is that of Probable anaerobic glycerol-3-phosphate dehydrogenase subunit B from Halobacterium salinarum (strain ATCC 29341 / DSM 671 / R1).